Consider the following 504-residue polypeptide: Multicopper oxidase MmcO (504 aa).

The tat-type signal signal peptide spans 1–44 (MPELATSGNAFDKRRFSRRGFLGAGIASGFALAACASKPTASGA). The Cu cation site is built by His-120, His-122, His-161, and His-163. Residues 190-349 (EWIIILDDWT…NALARALLST (160 aa)) form the Plastocyanin-like domain. 7 residues coordinate Cu cation: His-437, His-440, His-442, His-485, Cys-486, His-487, and His-491.

The protein belongs to the multicopper oxidase family. It depends on Cu cation as a cofactor. In terms of processing, predicted to be exported by the Tat system. The position of the signal peptide cleavage has not been experimentally proven.

Its subcellular location is the cell inner membrane. It is found in the periplasm. The enzyme catalyses 4 Fe(2+) + O2 + 4 H(+) = 4 Fe(3+) + 2 H2O. Required for copper resistance. In vitro, oxidizes organic substrates and Fe(2+). May act in vivo by oxidation of toxic periplasmic Cu(+). In Mycobacterium tuberculosis (strain ATCC 25618 / H37Rv), this protein is Multicopper oxidase MmcO.